We begin with the raw amino-acid sequence, 201 residues long: Protein tirC (201 aa).

One can recognise a TIR domain in the interval 52 to 186 (ERIKVFIVHG…YVWINYTEDL (135 aa)).

This is Protein tirC (tirC) from Dictyostelium discoideum (Social amoeba).